The primary structure comprises 135 residues: uncharacterized protein (135 aa).

Residues 4–129 (SIVHIALVVN…YGNLWDLLQL (126 aa)) enclose the VOC domain.

This sequence to B.subtilis YwkD.

This is an uncharacterized protein from Shewanella frigidimarina (strain NCIMB 400).